The following is a 57-amino-acid chain: Large ribosomal subunit protein bL32 (57 aa).

Basic residues predominate over residues 1 to 16; sequence MAVQKSRKTRSKRGMR. The interval 1–45 is disordered; the sequence is MAVQKSRKTRSKRGMRRSHDALTAPAQLSVDATSGETHRRHHMTA.

It belongs to the bacterial ribosomal protein bL32 family.

This chain is Large ribosomal subunit protein bL32, found in Psychromonas ingrahamii (strain DSM 17664 / CCUG 51855 / 37).